The chain runs to 293 residues: Formamidopyrimidine-DNA glycosylase (293 aa).

The Schiff-base intermediate with DNA role is filled by proline 2. Glutamate 3 serves as the catalytic Proton donor. Lysine 60 functions as the Proton donor; for beta-elimination activity in the catalytic mechanism. DNA is bound by residues histidine 110, arginine 129, and arginine 174. The FPG-type zinc-finger motif lies at 259–293 (NVYRRTGKECRKCGNLIERKKISGRSTHWCPKCQK). Arginine 283 functions as the Proton donor; for delta-elimination activity in the catalytic mechanism.

Belongs to the FPG family. Monomer. Zn(2+) serves as cofactor.

The enzyme catalyses Hydrolysis of DNA containing ring-opened 7-methylguanine residues, releasing 2,6-diamino-4-hydroxy-5-(N-methyl)formamidopyrimidine.. The catalysed reaction is 2'-deoxyribonucleotide-(2'-deoxyribose 5'-phosphate)-2'-deoxyribonucleotide-DNA = a 3'-end 2'-deoxyribonucleotide-(2,3-dehydro-2,3-deoxyribose 5'-phosphate)-DNA + a 5'-end 5'-phospho-2'-deoxyribonucleoside-DNA + H(+). In terms of biological role, involved in base excision repair of DNA damaged by oxidation or by mutagenic agents. Acts as a DNA glycosylase that recognizes and removes damaged bases. Has a preference for oxidized purines, such as 7,8-dihydro-8-oxoguanine (8-oxoG). Has AP (apurinic/apyrimidinic) lyase activity and introduces nicks in the DNA strand. Cleaves the DNA backbone by beta-delta elimination to generate a single-strand break at the site of the removed base with both 3'- and 5'-phosphates. In Prochlorococcus marinus (strain MIT 9215), this protein is Formamidopyrimidine-DNA glycosylase.